Here is a 713-residue protein sequence, read N- to C-terminus: Mitochondrial intermediate peptidase (713 aa).

The N-terminal 35 residues, 1–35 (MLCVGRLGGLGARAAALPPRRAGRGILEAGIRARR), are a transit peptide targeting the mitochondrion. K126 carries the N6-acetyllysine modification. Residue H495 coordinates Zn(2+). E496 is an active-site residue. Positions 499 and 502 each coordinate Zn(2+).

It belongs to the peptidase M3 family. Monomer. Requires Zn(2+) as cofactor.

It is found in the mitochondrion matrix. The enzyme catalyses Release of an N-terminal octapeptide as second stage of processing of some proteins imported into the mitochondrion.. Its activity is regulated as follows. Activity is divalent cation-dependent. It is stimulated by manganese, magnesium or calcium ions and reversibly inhibited by zinc, cobalt and iron. Its function is as follows. Cleaves proteins, imported into the mitochondrion, to their mature size. In Pongo abelii (Sumatran orangutan), this protein is Mitochondrial intermediate peptidase (MIPEP).